The sequence spans 323 residues: Protein translocase subunit SecF (323 aa).

6 helical membrane passes run 19-39, 138-158, 162-182, 189-209, 244-264, and 269-289; these read GVIV…FKGF, ILSL…RYEW, LASV…VIVF, EVIA…IIIF, LTVF…IIGF, and LIGT…VALL.

This sequence belongs to the SecD/SecF family. SecF subfamily. As to quaternary structure, forms a complex with SecD. Part of the essential Sec protein translocation apparatus which comprises SecA, SecYEG and auxiliary proteins SecDF-YajC and YidC.

Its subcellular location is the cell inner membrane. Functionally, part of the Sec protein translocase complex. Interacts with the SecYEG preprotein conducting channel. SecDF uses the proton motive force (PMF) to complete protein translocation after the ATP-dependent function of SecA. This Helicobacter pylori (strain J99 / ATCC 700824) (Campylobacter pylori J99) protein is Protein translocase subunit SecF.